The sequence spans 438 residues: Glutamyl-tRNA reductase (438 aa).

Substrate contacts are provided by residues Thr-49–Arg-52, Ser-109, Glu-114–Gln-116, and Gln-120. The active-site Nucleophile is the Cys-50. Position 197–202 (Gly-197–Ser-202) interacts with NADP(+).

It belongs to the glutamyl-tRNA reductase family. As to quaternary structure, homodimer.

It catalyses the reaction (S)-4-amino-5-oxopentanoate + tRNA(Glu) + NADP(+) = L-glutamyl-tRNA(Glu) + NADPH + H(+). It participates in porphyrin-containing compound metabolism; protoporphyrin-IX biosynthesis; 5-aminolevulinate from L-glutamyl-tRNA(Glu): step 1/2. It functions in the pathway porphyrin-containing compound metabolism; chlorophyll biosynthesis. Catalyzes the NADPH-dependent reduction of glutamyl-tRNA(Glu) to glutamate 1-semialdehyde (GSA). This is Glutamyl-tRNA reductase from Synechococcus elongatus (strain ATCC 33912 / PCC 7942 / FACHB-805) (Anacystis nidulans R2).